Consider the following 84-residue polypeptide: Small ribosomal subunit protein bS20 (84 aa).

This sequence belongs to the bacterial ribosomal protein bS20 family.

Binds directly to 16S ribosomal RNA. The protein is Small ribosomal subunit protein bS20 of Lactiplantibacillus plantarum (strain ATCC BAA-793 / NCIMB 8826 / WCFS1) (Lactobacillus plantarum).